A 359-amino-acid polypeptide reads, in one-letter code: uncharacterized protein (359 aa).

Transmembrane regions (helical) follow at residues 4 to 24, 36 to 56, 68 to 88, 94 to 114, 129 to 149, and 155 to 175; these read ELFVNLTILITFNYLFTHLFK, FQAVKGLACGLLGVILMVFGF, IPIMIAALYGGWVSTATALAM, LLITMNTSALYSVIIICIAAI, HAFYLLIITNSLISFSFYFLI, and ELHLYFWIISIAGGMLSLYII. The region spanning 223–357 is the GGDEF domain; the sequence is FQFALIYMDI…GRNRVCFSEK (135 aa).

It is found in the cell membrane. This is an uncharacterized protein from Bacillus subtilis (strain 168).